The primary structure comprises 227 residues: MRIDIVTIFPTFFDVLDISLLGKARQTGRIALGVHDLRDHTHDRHRTVDDTPYGGGAGMVMKPGPWGEALDGVLDGAEDPVVIFPSPAGEPFTQAMARELAGEQHLVFGCGRYEGIDQRVFDDAASHARVRLVSLGDYVLNGGEVATMAMIEAVGRLIPGVVGNPESLVQESHGDGLLEYPSYTKPAEWRGRAVPPVLLSGNHGAIAAWRREQSVARTERVRPDLLP.

S-adenosyl-L-methionine-binding positions include G111 and 135-140 (LGDYVL).

Belongs to the RNA methyltransferase TrmD family. In terms of assembly, homodimer.

Its subcellular location is the cytoplasm. It catalyses the reaction guanosine(37) in tRNA + S-adenosyl-L-methionine = N(1)-methylguanosine(37) in tRNA + S-adenosyl-L-homocysteine + H(+). Its function is as follows. Specifically methylates guanosine-37 in various tRNAs. The protein is tRNA (guanine-N(1)-)-methyltransferase of Leifsonia xyli subsp. xyli (strain CTCB07).